The sequence spans 108 residues: Large ribosomal subunit protein bL21 (108 aa).

It belongs to the bacterial ribosomal protein bL21 family. As to quaternary structure, part of the 50S ribosomal subunit. Contacts protein L20.

Functionally, this protein binds to 23S rRNA in the presence of protein L20. This is Large ribosomal subunit protein bL21 from Acidobacterium capsulatum (strain ATCC 51196 / DSM 11244 / BCRC 80197 / JCM 7670 / NBRC 15755 / NCIMB 13165 / 161).